The primary structure comprises 586 residues: Alpha-1,2-mannosyltransferase MNN5 (586 aa).

A signal peptide spans 1–29 (MLIRLKKRKILQVIVSAVVLILFFCSVHN). 4 N-linked (GlcNAc...) asparagine glycosylation sites follow: asparagine 113, asparagine 136, asparagine 259, and asparagine 264.

Belongs to the MNN1/MNT family. As to quaternary structure, interacts with SVP26. Glycosylated.

It localises to the golgi apparatus. The protein resides in the cis-Golgi network. Its pathway is protein modification; protein glycosylation. Functionally, responsible for addition of first and second mannose residues to the outer chain of core N-linked polysaccharides and to O-linked mannotriose. Implicated in late Golgi modifications. This is Alpha-1,2-mannosyltransferase MNN5 (MNN5) from Saccharomyces cerevisiae (strain ATCC 204508 / S288c) (Baker's yeast).